The following is a 145-amino-acid chain: D-aminoacyl-tRNA deacylase (145 aa).

The short motif at 137–138 (GP) is the Gly-cisPro motif, important for rejection of L-amino acids element.

It belongs to the DTD family. As to quaternary structure, homodimer.

It is found in the cytoplasm. It catalyses the reaction glycyl-tRNA(Ala) + H2O = tRNA(Ala) + glycine + H(+). The enzyme catalyses a D-aminoacyl-tRNA + H2O = a tRNA + a D-alpha-amino acid + H(+). Its function is as follows. An aminoacyl-tRNA editing enzyme that deacylates mischarged D-aminoacyl-tRNAs. Also deacylates mischarged glycyl-tRNA(Ala), protecting cells against glycine mischarging by AlaRS. Acts via tRNA-based rather than protein-based catalysis; rejects L-amino acids rather than detecting D-amino acids in the active site. By recycling D-aminoacyl-tRNA to D-amino acids and free tRNA molecules, this enzyme counteracts the toxicity associated with the formation of D-aminoacyl-tRNA entities in vivo and helps enforce protein L-homochirality. The chain is D-aminoacyl-tRNA deacylase from Rhodococcus jostii (strain RHA1).